Consider the following 937-residue polypeptide: MGKKRIYELAKEINVASKDILETANKKGYDLKNHMATIDDNQEKTLRAAFQTKATPAASKPATPAAPKASEKSESGKIKINKTAIRRRPEADKKPAQHSNNRPQANANRNGQASNGQNRTNNARPNNNSARPNNSRPNTNSRPNNNSQNRSTSANHPMSLQEQISQANARRQRTQERIQQQREQREADEKKRREQANRPRPTRNNASNNRPSNGKPTNGARPTTNSPRPTVTKDGRPLGSSRPNNNNSARPNTTNNRPTNSRPATTPSRPVSAQEMQQKMQANTVSASKPASNNTASKPKNFGPDKKRGGGYNSYGNSQQRFNKKRKKTRKQQLAEQNAAKKEMPQRKERPLPEVLVFSEGMNVADIAKKIHREPAEIIKKLFMLGIMVNMNQSLDKDTIELLATDYGIEAEQKVEVDIADIDSVFETEAKSDANLVSRPPVVTIMGHVDHGKTTLLDNLRNSHVTDGEAGGITQHIGAYQTKLNDRLITFLDTPGHAAFTNMRARGADITDIIILVVAADDGVMPQTIEAINHAKAAKAPIIVAVNKIDKPGANPDHVMEQLMGYGLVPEDWGGDTIFVKISAKTGENIDDLLEMVLLEADVLELKANRDQKAVGTVIEARLDKGKGPVASLLVQQGTLRIGDPIVVGNTFGRVRVMTNDRGRRVKEVFPSEPVEITGLNDVPQAADRFVVFEDEKTARAAGEERAKRALLKERSRSNPVTLDNLFETMKQGELKEVGVIIKADVQGSTEALAGSLRKIEVEGVRVNIIHEAVGAINESDVTLAAASNAIIIGFNVRPTPQAKIQADAEQVDIRLHRIIYKAIEEIEAAMKGMLEPVYEEKVTGQLTVRETYNVSKIGTIAGCIVDTGVIRRDSGVRLIRDSIVIYEGKLSSLKRFKDDVKEVKTGFECGVTIEDYNDIKIDDQIEAYVMEEVPVK.

The interval 47–352 is disordered; that stretch reads RAAFQTKATP…EMPQRKERPL (306 aa). Positions 52–68 are enriched in low complexity; sequence TKATPAASKPATPAAPK. The segment covering 97 to 116 has biased composition (polar residues); that stretch reads QHSNNRPQANANRNGQASNG. A compositionally biased stretch (low complexity) spans 117–153; it reads QNRTNNARPNNNSARPNNSRPNTNSRPNNNSQNRSTS. Over residues 154–169 the composition is skewed to polar residues; that stretch reads ANHPMSLQEQISQANA. Positions 173–197 are enriched in basic and acidic residues; it reads RTQERIQQQREQREADEKKRREQAN. Residues 202 to 229 show a composition bias toward polar residues; it reads TRNNASNNRPSNGKPTNGARPTTNSPRP. Low complexity predominate over residues 240-269; that stretch reads SSRPNNNNSARPNTTNNRPTNSRPATTPSR. The span at 274–298 shows a compositional bias: polar residues; the sequence is QEMQQKMQANTVSASKPASNNTASK. A compositionally biased stretch (basic residues) spans 322-331; sequence FNKKRKKTRK. Basic and acidic residues predominate over residues 339 to 352; that stretch reads AAKKEMPQRKERPL. A tr-type G domain is found at 438–607; that stretch reads SRPPVVTIMG…LLEADVLELK (170 aa). The segment at 447–454 is G1; the sequence is GHVDHGKT. A GTP-binding site is contributed by 447–454; that stretch reads GHVDHGKT. Residues 472–476 form a G2 region; that stretch reads GITQH. The tract at residues 493–496 is G3; sequence DTPG. GTP contacts are provided by residues 493–497 and 547–550; these read DTPGH and NKID. The interval 547 to 550 is G4; the sequence is NKID. The G5 stretch occupies residues 583 to 585; it reads SAK.

Belongs to the TRAFAC class translation factor GTPase superfamily. Classic translation factor GTPase family. IF-2 subfamily.

It is found in the cytoplasm. One of the essential components for the initiation of protein synthesis. Protects formylmethionyl-tRNA from spontaneous hydrolysis and promotes its binding to the 30S ribosomal subunits. Also involved in the hydrolysis of GTP during the formation of the 70S ribosomal complex. The sequence is that of Translation initiation factor IF-2 from Latilactobacillus sakei subsp. sakei (strain 23K) (Lactobacillus sakei subsp. sakei).